A 408-amino-acid chain; its full sequence is DNA polymerase processivity factor (408 aa).

Positions Lys-344–Arg-353 match the Nuclear localization signal motif.

It belongs to the herpesviridae DNA polymerase processivity factor family. In terms of assembly, interacts with the DNA polymerase catalytic subunit. Interacts with the origin-binding protein.

It localises to the host nucleus. Plays an essential role in viral DNA replication by acting as the polymerase accessory subunit. Associates with the viral polymerase to increase its processivity and forms high-affinity direct interactions with DNA. Facilitates the origin-binding protein loading onto DNA thus increasing its ability to assemble into a functional complex capable of unwinding duplex DNA. The polypeptide is DNA polymerase processivity factor (Varicella-zoster virus (strain Oka vaccine) (HHV-3)).